The chain runs to 548 residues: Probable malate:quinone oxidoreductase (548 aa).

Belongs to the MQO family. FAD is required as a cofactor.

The catalysed reaction is (S)-malate + a quinone = a quinol + oxaloacetate. It participates in carbohydrate metabolism; tricarboxylic acid cycle; oxaloacetate from (S)-malate (quinone route): step 1/1. The sequence is that of Probable malate:quinone oxidoreductase from Escherichia coli O6:H1 (strain CFT073 / ATCC 700928 / UPEC).